The sequence spans 214 residues: Urease accessory protein UreG (214 aa).

The tract at residues M1–G20 is disordered. G23 to T30 provides a ligand contact to GTP.

This sequence belongs to the SIMIBI class G3E GTPase family. UreG subfamily. As to quaternary structure, homodimer. UreD, UreF and UreG form a complex that acts as a GTP-hydrolysis-dependent molecular chaperone, activating the urease apoprotein by helping to assemble the nickel containing metallocenter of UreC. The UreE protein probably delivers the nickel.

It is found in the cytoplasm. Facilitates the functional incorporation of the urease nickel metallocenter. This process requires GTP hydrolysis, probably effectuated by UreG. This chain is Urease accessory protein UreG, found in Leptothrix cholodnii (strain ATCC 51168 / LMG 8142 / SP-6) (Leptothrix discophora (strain SP-6)).